The sequence spans 276 residues: Large ribosomal subunit protein uL2 (276 aa).

Disordered regions lie at residues 1–58 (MAIR…GGGH) and 218–276 (RPIT…KNRK). The span at 16–27 (ASVSDFSDLTRS) shows a compositional bias: polar residues. Residues 255–276 (RRPKKASNKMIVRRRPNGKNRK) show a composition bias toward basic residues.

The protein belongs to the universal ribosomal protein uL2 family. In terms of assembly, part of the 50S ribosomal subunit. Forms a bridge to the 30S subunit in the 70S ribosome.

One of the primary rRNA binding proteins. Required for association of the 30S and 50S subunits to form the 70S ribosome, for tRNA binding and peptide bond formation. It has been suggested to have peptidyltransferase activity; this is somewhat controversial. Makes several contacts with the 16S rRNA in the 70S ribosome. This Bifidobacterium animalis subsp. lactis (strain AD011) protein is Large ribosomal subunit protein uL2.